Here is a 486-residue protein sequence, read N- to C-terminus: MDSSVIQRKKVAVIGGGLVGSLQACFLAKRNFQIDVYEAREDTRVATFTRGRSINLALSHRGRQALKAVGLEDQIVSQGIPMRARMIHSLSGKKSAIPYGTKSQYILSVSRENLNKDLLTAAEKYPNVKMHFNHRLLKCNPEEGMITVLGSDKVPKDVTCDLIVGCDGAYSTVRSHLMKKPRFDYSQQYIPHGYMELTIPPKNGDYAMEPNYLHIWPRNTFMMIALPNMNKSFTCTLFMPFEEFEKLLTSNDVVDFFQKYFPDAIPLIGEKLLVQDFFLLPAQPMISVKCSSFHFKSHCVLLGDAAHAIVPFFGQGMNAGFEDCLVFDELMDKFSNDLSLCLPVFSRLRIPDDHAISDLSMYNYIEMRAHVNSSWFIFQKNMERFLHAIMPSTFIPLYTMVTFSRIRYHEAVQRWHWQKKVINKGLFFLGSLIAISSTYLLIHYMSPRSFLRLRRPWNWIAHFRNTTCFPAKAVDSLEQISNLISR.

Residues V19, 37-40, and A57 each bind FAD; that span reads YEAR. L-kynurenine contacts are provided by R85 and Y99. Residues R111, L136, T172, D304, and 317–318 contribute to the FAD site; that span reads MN. Positions 363 and 398 each coordinate L-kynurenine. The next 2 helical transmembrane spans lie at 385-404 and 425-445; these read FLHA…VTFS and GLFF…IHYM. The N-linked (GlcNAc...) asparagine glycan is linked to N465.

This sequence belongs to the aromatic-ring hydroxylase family. KMO subfamily. FAD serves as cofactor. Highest levels in placenta and liver. Detectable in kidney.

Its subcellular location is the mitochondrion outer membrane. The catalysed reaction is L-kynurenine + NADPH + O2 + H(+) = 3-hydroxy-L-kynurenine + NADP(+) + H2O. The protein operates within cofactor biosynthesis; NAD(+) biosynthesis; quinolinate from L-kynurenine: step 1/3. Functionally, catalyzes the hydroxylation of L-kynurenine (L-Kyn) to form 3-hydroxy-L-kynurenine (L-3OHKyn). Required for synthesis of quinolinic acid, a neurotoxic NMDA receptor antagonist and potential endogenous inhibitor of NMDA receptor signaling in axonal targeting, synaptogenesis and apoptosis during brain development. Quinolinic acid may also affect NMDA receptor signaling in pancreatic beta cells, osteoblasts, myocardial cells, and the gastrointestinal tract. The polypeptide is Kynurenine 3-monooxygenase (Homo sapiens (Human)).